The chain runs to 194 residues: Phosphoheptose isomerase (194 aa).

In terms of domain architecture, SIS spans 37 to 194 (ISNSFKQGGK…LIEFEMAKQA (158 aa)). Position 52 to 54 (52 to 54 (NGG)) interacts with substrate. Zn(2+)-binding residues include H61 and E65. Residues E65, 93–94 (ND), 119–121 (STS), S124, and Q172 each bind substrate. Residues Q172 and H180 each coordinate Zn(2+).

It belongs to the SIS family. GmhA subfamily. As to quaternary structure, homotetramer. It depends on Zn(2+) as a cofactor.

Its subcellular location is the cytoplasm. The catalysed reaction is 2 D-sedoheptulose 7-phosphate = D-glycero-alpha-D-manno-heptose 7-phosphate + D-glycero-beta-D-manno-heptose 7-phosphate. Its pathway is carbohydrate biosynthesis; D-glycero-D-manno-heptose 7-phosphate biosynthesis; D-glycero-alpha-D-manno-heptose 7-phosphate and D-glycero-beta-D-manno-heptose 7-phosphate from sedoheptulose 7-phosphate: step 1/1. Functionally, catalyzes the isomerization of sedoheptulose 7-phosphate in D-glycero-D-manno-heptose 7-phosphate. The polypeptide is Phosphoheptose isomerase (Haemophilus influenzae (strain PittGG)).